The following is an 83-amino-acid chain: Probable calcium-binding protein CML29 (83 aa).

2 EF-hand domains span residues 5 to 40 (TEKAEHDRIFKKFDANGDGKISAAELEEALKTLGSV) and 43 to 75 (DDVKRMMAEIDTDGDGNISYQEFTDFAGANRGL). Positions 18, 20, 22, 24, 29, 53, 55, 57, 59, and 64 each coordinate Ca(2+).

In terms of biological role, potential calcium sensor. In Arabidopsis thaliana (Mouse-ear cress), this protein is Probable calcium-binding protein CML29 (CML29).